The sequence spans 321 residues: tRNA-dihydrouridine synthase B (321 aa).

FMN contacts are provided by residues 16-18 and Gln-70; that span reads PMA. Cys-100 serves as the catalytic Proton donor. FMN-binding positions include Lys-139, 200-202, and 224-225; these read NGD and GR.

Belongs to the Dus family. DusB subfamily. It depends on FMN as a cofactor.

It catalyses the reaction a 5,6-dihydrouridine in tRNA + NAD(+) = a uridine in tRNA + NADH + H(+). The catalysed reaction is a 5,6-dihydrouridine in tRNA + NADP(+) = a uridine in tRNA + NADPH + H(+). Functionally, catalyzes the synthesis of 5,6-dihydrouridine (D), a modified base found in the D-loop of most tRNAs, via the reduction of the C5-C6 double bond in target uridines. The chain is tRNA-dihydrouridine synthase B from Yersinia pestis.